The following is a 73-amino-acid chain: Defensin-like protein 87 (73 aa).

A signal peptide spans methionine 1–glycine 27. 3 disulfides stabilise this stretch: cysteine 33–cysteine 71, cysteine 45–cysteine 69, and cysteine 49–cysteine 70.

This sequence belongs to the DEFL family.

The protein localises to the secreted. The chain is Defensin-like protein 87 from Arabidopsis thaliana (Mouse-ear cress).